A 105-amino-acid polypeptide reads, in one-letter code: MRKIKRDDEVIVIAGRDKGKRGKVVRVLAEDRLIVSGINMIKKHQKPNPQLGVAGGIVEKEAAIHASNVAIYNPATKKADRVGFKILENGNKVRVFKSNGEAVEA.

It belongs to the universal ribosomal protein uL24 family. As to quaternary structure, part of the 50S ribosomal subunit.

In terms of biological role, one of two assembly initiator proteins, it binds directly to the 5'-end of the 23S rRNA, where it nucleates assembly of the 50S subunit. Functionally, one of the proteins that surrounds the polypeptide exit tunnel on the outside of the subunit. The polypeptide is Large ribosomal subunit protein uL24 (Cellvibrio japonicus (strain Ueda107) (Pseudomonas fluorescens subsp. cellulosa)).